Reading from the N-terminus, the 526-residue chain is Meiotically up-regulated gene 99 protein, mitochondrial (526 aa).

2 helical membrane-spanning segments follow: residues threonine 398–valine 418 and phenylalanine 421–leucine 441.

Its subcellular location is the mitochondrion membrane. Functionally, required for correct meiotic chromosome segregation. Appears to also have role in sporulation. The protein is Meiotically up-regulated gene 99 protein, mitochondrial (mug99) of Schizosaccharomyces pombe (strain 972 / ATCC 24843) (Fission yeast).